The chain runs to 451 residues: AP-4 complex subunit mu (451 aa).

The region spanning 184–450 (REEIFVDIIE…VTQANSYVAR (267 aa)) is the MHD domain.

This sequence belongs to the adaptor complexes medium subunit family. As to quaternary structure, adaptor protein complex 4 (AP-4) is a heterotetramer composed of two large adaptins (epsilon-type subunit and beta-type subunit), a medium adaptin (mu-type subunit) and a small adaptin (sigma-type subunit).

Its subcellular location is the golgi apparatus. The protein resides in the trans-Golgi network. It localises to the membrane. The protein localises to the coated pit. Subunit of novel type of clathrin- or non-clathrin-associated protein coat involved in targeting proteins from the trans-Golgi network (TGN) to the endosomal-lysosomal system. The sequence is that of AP-4 complex subunit mu (AP4M) from Arabidopsis thaliana (Mouse-ear cress).